The sequence spans 195 residues: Imidazoleglycerol-phosphate dehydratase (195 aa).

This sequence belongs to the imidazoleglycerol-phosphate dehydratase family.

Its subcellular location is the cytoplasm. It catalyses the reaction D-erythro-1-(imidazol-4-yl)glycerol 3-phosphate = 3-(imidazol-4-yl)-2-oxopropyl phosphate + H2O. The protein operates within amino-acid biosynthesis; L-histidine biosynthesis; L-histidine from 5-phospho-alpha-D-ribose 1-diphosphate: step 6/9. The protein is Imidazoleglycerol-phosphate dehydratase of Bordetella petrii (strain ATCC BAA-461 / DSM 12804 / CCUG 43448).